The primary structure comprises 276 residues: Tryptophan synthase alpha chain (276 aa).

Active-site proton acceptor residues include E46 and E57.

It belongs to the TrpA family. Tetramer of two alpha and two beta chains.

It carries out the reaction (1S,2R)-1-C-(indol-3-yl)glycerol 3-phosphate + L-serine = D-glyceraldehyde 3-phosphate + L-tryptophan + H2O. It functions in the pathway amino-acid biosynthesis; L-tryptophan biosynthesis; L-tryptophan from chorismate: step 5/5. In terms of biological role, the alpha subunit is responsible for the aldol cleavage of indoleglycerol phosphate to indole and glyceraldehyde 3-phosphate. This is Tryptophan synthase alpha chain from Halobacterium salinarum (strain ATCC 29341 / DSM 671 / R1).